Consider the following 131-residue polypeptide: Fluoride-specific ion channel FluC (131 aa).

3 helical membrane-spanning segments follow: residues 3–23 (AAANLPAFLAVGAGAALGAWL), 34–54 (IFLTIPFGTLAANLLGGLLMG), and 62–82 (AVPAMSPVLKLLLTTGFLGGL). Residues Gly80 and Thr83 each contribute to the Na(+) site. Residues 101 to 121 (WGWLALHAAVHVAGSLLMAWI) form a helical membrane-spanning segment.

This sequence belongs to the fluoride channel Fluc/FEX (TC 1.A.43) family.

The protein resides in the cell inner membrane. The enzyme catalyses fluoride(in) = fluoride(out). Na(+) is not transported, but it plays an essential structural role and its presence is essential for fluoride channel function. Fluoride-specific ion channel. Important for reducing fluoride concentration in the cell, thus reducing its toxicity. This chain is Fluoride-specific ion channel FluC, found in Aromatoleum aromaticum (strain DSM 19018 / LMG 30748 / EbN1) (Azoarcus sp. (strain EbN1)).